A 119-amino-acid polypeptide reads, in one-letter code: Dolichyl-diphosphooligosaccharide--protein glycosyltransferase subunit DAD1 (119 aa).

Serine 2 is modified (N-acetylserine). Topologically, residues 2–30 are cytoplasmic; the sequence is SASVASVISRFLEEYLSSTPQRLKLLDAY. Residues 31–51 traverse the membrane as a helical segment; the sequence is LLYILLTGALQFGYCLLVGTF. The Lumenal segment spans residues 52–54; it reads PFN. Residues 55 to 75 form a helical membrane-spanning segment; the sequence is SFLSGFISCVGSFILAGNGSL. Residues 76-81 are Cytoplasmic-facing; it reads RNRSNN. Residues 82 to 98 traverse the membrane as a helical segment; the sequence is VFTLVRCFSSLVTLFYS. Residues 99 to 119 lie on the Lumenal side of the membrane; that stretch reads RSPPREVPRGACIALFCERGN.

This sequence belongs to the DAD/OST2 family. As to quaternary structure, component of the oligosaccharyltransferase (OST) complex. OST exists in two different complex forms which contain common core subunits RPN1, RPN2, OST48, OST4, DAD1 and TMEM258, either STT3A or STT3B as catalytic subunits, and form-specific accessory subunits. STT3A complex assembly occurs through the formation of 3 subcomplexes. Subcomplex 1 contains RPN1 and TMEM258, subcomplex 2 contains the STT3A-specific subunits STT3A, DC2/OSTC, and KCP2 as well as the core subunit OST4, and subcomplex 3 contains RPN2, DAD1, and OST48. The STT3A complex can form stable complexes with the Sec61 complex or with both the Sec61 and TRAP complexes.

Its subcellular location is the endoplasmic reticulum membrane. It functions in the pathway protein modification; protein glycosylation. In terms of biological role, subunit of the oligosaccharyl transferase (OST) complex that catalyzes the initial transfer of a defined glycan (Glc(3)Man(9)GlcNAc(2) in eukaryotes) from the lipid carrier dolichol-pyrophosphate to an asparagine residue within an Asn-X-Ser/Thr consensus motif in nascent polypeptide chains, the first step in protein N-glycosylation. N-glycosylation occurs cotranslationally and the complex associates with the Sec61 complex at the channel-forming translocon complex that mediates protein translocation across the endoplasmic reticulum (ER). All subunits are required for a maximal enzyme activity. This chain is Dolichyl-diphosphooligosaccharide--protein glycosyltransferase subunit DAD1, found in Canis lupus familiaris (Dog).